The chain runs to 188 residues: Chitin synthase 1 (188 aa).

Belongs to the chitin synthase family. Class I subfamily.

It localises to the cell membrane. The enzyme catalyses [(1-&gt;4)-N-acetyl-beta-D-glucosaminyl](n) + UDP-N-acetyl-alpha-D-glucosamine = [(1-&gt;4)-N-acetyl-beta-D-glucosaminyl](n+1) + UDP + H(+). In terms of biological role, polymerizes chitin, a structural polymer of the cell wall and septum, by transferring the sugar moiety of UDP-GlcNAc to the non-reducing end of the growing chitin polymer. In Ajellomyces dermatitidis (Blastomyces dermatitidis), this protein is Chitin synthase 1 (CHS1).